Reading from the N-terminus, the 1426-residue chain is Epidermal growth factor receptor (1426 aa).

Positions 1–30 (MLLRRRNGPCPFPLLLLLLAHCICIWPASA) are cleaved as a signal peptide. Residues 31-868 (ARDRYARQNN…SKITANLDVN (838 aa)) are Extracellular-facing. Asn128, Asn241, Asn419, Asn443, Asn482, Asn569, Asn599, Asn617, Asn816, Asn823, and Asn828 each carry an N-linked (GlcNAc...) asparagine glycan. Residues 869–889 (MIFIITGAVLVPTICILCVVT) form a helical membrane-spanning segment. At 890 to 1426 (YICRQKQKAK…HRNRNTETRV (537 aa)) the chain is on the cytoplasmic side. The residue at position 902 (Thr902) is a Phosphothreonine; by PKC. One can recognise a Protein kinase domain in the interval 938–1198 (LRKGGVLGMG…QLTTVFAEFA (261 aa)). ATP is bound by residues 944–952 (LGMGAFGRV) and Lys971. The active-site Proton acceptor is Asp1063. Residues 1232-1297 (PTTDGSEAIA…DSSAREVGVG (66 aa)) form a disordered region. Over residues 1257-1276 (HRTDCTDEMPKLNRYCKDPS) the composition is skewed to basic and acidic residues. Position 1310 is a phosphotyrosine; by autocatalysis (Tyr1310).

The protein belongs to the protein kinase superfamily. Tyr protein kinase family. EGF receptor subfamily. In terms of assembly, homodimer. Binding of the ligand spitz triggers homodimerization of the receptor however, it is able to form dimers, albeit weakly, in the absence of spitz. Interacts (when phosphorylated on tyrosine residues) with Vav (via SH2 domain). Interacts (when ubiquitinated) with Graf. May interact (when phosphorylated) with EGFRAP (via SH2 domain). In terms of processing, ubiquitination by Cbl in response to high spi, promotes its interaction with Graf and thus facilitates its GPI-enriched endocytic compartment (GEEC) mediated endocytosis and its subsequent degradation. Ubiquitously expressed in embryos. In larvae, uniform expression is seen in wing disks, genital disk, anlagen of testis and ovary, and brain cortex. In eye-antenna disk, highest expression is anterior to morphogenetic furrow, levels remain high in photoreceptor precursor cells. This pattern is reversed in posterior eye disk. In adults expression is high in brain cortex and thoracic and abdominal ganglia.

It localises to the membrane. It catalyses the reaction L-tyrosyl-[protein] + ATP = O-phospho-L-tyrosyl-[protein] + ADP + H(+). Its function is as follows. Receptor tyrosine kinase, binding ligands of the EGF family and activating several signaling cascades to convert extracellular cues into appropriate cellular responses. Known ligands include spitz, gurken, vein and giant-lens. Transduces the signal through the ras-raf-MAPK pathway. Critical for the proliferation of imaginal tissues, and for the determination of both the antero-posterior and dorso-ventral polarities of the oocyte. In the embryo, plays a role in the establishment of ventral cell fates, maintenance of amnioserosa and ventral neuroectodermal cells, germ band retraction, cell fate specification in the central nervous system, and production and repair of the cuticle. During dorsal closure (DC) functions with the dpp- and ACK-signaling pathways to regulate expression of the myosin zip in the embryonic epidermis and amnioserosa (AS), and thus coordinate the progression of epidermal cell shape changes required for correct DC. In the embryonic epidermis, functions by negatively regulating dpp and consequently the dpp-dependent expression of the myosin zip. In the AS, negatively regulates the production/ and or secretion of a diffusible signal which, is produced by the ACK-signaling pathway, and acts in the AS and epidermal cells to promote zip expression. Also required in the AS to inhibit or delay apoptosis, and consequently slow the rate of DC. Therefore functions at multiple levels to negatively regulate morphogenesis during DC, suggesting that it acts as a general brake mechanism for adjusting the rate of dorsal closure to ensure that closure proceeds smoothly and without loss of epidermal integrity. During oogenesis, one of two tyrosine kinase chemoattractant receptors (Egfr and Pvr), that function in the border cells (BC) to detect guidance cues from the oocyte and transduce this information to the guidance pathway that regulate the collective migration of the BC cluster through the nurse cells to the oocyte. The polypeptide is Epidermal growth factor receptor (Egfr) (Drosophila melanogaster (Fruit fly)).